The chain runs to 544 residues: Protein anon-37Cs (544 aa).

The protein resides in the cytoplasm. Functionally, has a non-vital function. The sequence is that of Protein anon-37Cs (anon-37Cs) from Drosophila lebanonensis (Fruit fly).